Reading from the N-terminus, the 91-residue chain is Protein RacC (91 aa).

In Escherichia coli (strain K12), this protein is Protein RacC (racC).